The primary structure comprises 219 residues: Ribosome maturation factor RimP (219 aa).

Disordered regions lie at residues Met1–Arg38 and Val189–Arg219. Residues Asp198–Arg219 are compositionally biased toward acidic residues.

Belongs to the RimP family.

It localises to the cytoplasm. Functionally, required for maturation of 30S ribosomal subunits. The sequence is that of Ribosome maturation factor RimP from Salinispora arenicola (strain CNS-205).